The following is a 245-amino-acid chain: Ribonuclease PH (245 aa).

Phosphate-binding positions include Arg-86 and 124 to 126 (GTR).

The protein belongs to the RNase PH family. In terms of assembly, homohexameric ring arranged as a trimer of dimers.

It carries out the reaction tRNA(n+1) + phosphate = tRNA(n) + a ribonucleoside 5'-diphosphate. Its function is as follows. Phosphorolytic 3'-5' exoribonuclease that plays an important role in tRNA 3'-end maturation. Removes nucleotide residues following the 3'-CCA terminus of tRNAs; can also add nucleotides to the ends of RNA molecules by using nucleoside diphosphates as substrates, but this may not be physiologically important. Probably plays a role in initiation of 16S rRNA degradation (leading to ribosome degradation) during starvation. This Bacillus mycoides (strain KBAB4) (Bacillus weihenstephanensis) protein is Ribonuclease PH.